The chain runs to 344 residues: MAKVLYEKDIQDGVLKNKKIAVIGYGSQGHAHAMNLRDSGYDVVVGLRPGKSQEKAEEDGFNVLSVAEASSQADVVMVLLPDEMQPKVYEESIKDNLEQGNALVFAHGFNIHFTQVVPPANVDVFLVAPKGPGHLVRRTFEEGAGVPALYGVHQDYTGEAKDVALAYSKGIGAARAGVLETSFQEETETDLFGEQAVLCGGVTSLIKAGFETLTDAGYQPEVAYFECLHEMKLIVDLLYEGGLENMRYSISDTAQWGDFVSGQRVVDDQTKERMKSILDDIQTGSFAKGWILENQAGRPQFNAINRRENRHPIETVGRELRELMPFVKQPINAKKKDVNVHVPN.

In terms of domain architecture, KARI N-terminal Rossmann spans 2-181; that stretch reads AKVLYEKDIQ…GAARAGVLET (180 aa). NADP(+)-binding positions include 25 to 28, Arg-48, Ser-52, and 82 to 85; these read YGSQ and DEMQ. His-107 is a catalytic residue. An NADP(+)-binding site is contributed by Gly-133. A KARI C-terminal knotted domain is found at 182–327; it reads SFQEETETDL…RELRELMPFV (146 aa). 4 residues coordinate Mg(2+): Asp-190, Glu-194, Glu-226, and Glu-230. Ser-251 is a binding site for substrate.

The protein belongs to the ketol-acid reductoisomerase family. Mg(2+) serves as cofactor.

It carries out the reaction (2R)-2,3-dihydroxy-3-methylbutanoate + NADP(+) = (2S)-2-acetolactate + NADPH + H(+). It catalyses the reaction (2R,3R)-2,3-dihydroxy-3-methylpentanoate + NADP(+) = (S)-2-ethyl-2-hydroxy-3-oxobutanoate + NADPH + H(+). The protein operates within amino-acid biosynthesis; L-isoleucine biosynthesis; L-isoleucine from 2-oxobutanoate: step 2/4. Its pathway is amino-acid biosynthesis; L-valine biosynthesis; L-valine from pyruvate: step 2/4. Involved in the biosynthesis of branched-chain amino acids (BCAA). Catalyzes an alkyl-migration followed by a ketol-acid reduction of (S)-2-acetolactate (S2AL) to yield (R)-2,3-dihydroxy-isovalerate. In the isomerase reaction, S2AL is rearranged via a Mg-dependent methyl migration to produce 3-hydroxy-3-methyl-2-ketobutyrate (HMKB). In the reductase reaction, this 2-ketoacid undergoes a metal-dependent reduction by NADPH to yield (R)-2,3-dihydroxy-isovalerate. The polypeptide is Ketol-acid reductoisomerase (NADP(+)) (Oceanobacillus iheyensis (strain DSM 14371 / CIP 107618 / JCM 11309 / KCTC 3954 / HTE831)).